The sequence spans 190 residues: uncharacterized protein (190 aa).

The first 28 residues, 1–28, serve as a signal peptide directing secretion; that stretch reads MEFSLQYITIFIFVILFLIGLFSSKSRS.

This is an uncharacterized protein from Haemophilus influenzae (strain ATCC 51907 / DSM 11121 / KW20 / Rd).